The primary structure comprises 330 residues: Ketol-acid reductoisomerase (NADP(+)) (330 aa).

Residues 1 to 181 (MNAYYEQDAD…GGTKAGVIET (181 aa)) form the KARI N-terminal Rossmann domain. Residues 24 to 27 (FGSQ), R47, S50, S52, and 82 to 85 (DQYQ) each bind NADP(+). H107 is a catalytic residue. G133 lines the NADP(+) pocket. The KARI C-terminal knotted domain occupies 182 to 327 (TFKNETETDL…AKLRDMMSWL (146 aa)). D190, E194, E226, and E230 together coordinate Mg(2+). S251 contributes to the substrate binding site.

This sequence belongs to the ketol-acid reductoisomerase family. Mg(2+) serves as cofactor.

It catalyses the reaction (2R)-2,3-dihydroxy-3-methylbutanoate + NADP(+) = (2S)-2-acetolactate + NADPH + H(+). It carries out the reaction (2R,3R)-2,3-dihydroxy-3-methylpentanoate + NADP(+) = (S)-2-ethyl-2-hydroxy-3-oxobutanoate + NADPH + H(+). The protein operates within amino-acid biosynthesis; L-isoleucine biosynthesis; L-isoleucine from 2-oxobutanoate: step 2/4. It functions in the pathway amino-acid biosynthesis; L-valine biosynthesis; L-valine from pyruvate: step 2/4. Involved in the biosynthesis of branched-chain amino acids (BCAA). Catalyzes an alkyl-migration followed by a ketol-acid reduction of (S)-2-acetolactate (S2AL) to yield (R)-2,3-dihydroxy-isovalerate. In the isomerase reaction, S2AL is rearranged via a Mg-dependent methyl migration to produce 3-hydroxy-3-methyl-2-ketobutyrate (HMKB). In the reductase reaction, this 2-ketoacid undergoes a metal-dependent reduction by NADPH to yield (R)-2,3-dihydroxy-isovalerate. The polypeptide is Ketol-acid reductoisomerase (NADP(+)) (Chlorobium phaeobacteroides (strain BS1)).